The primary structure comprises 663 residues: Oxytetracycline resistance protein (663 aa).

The tr-type G domain maps to M1 to H252. GTP-binding positions include A10–T17, D74–H78, and N128–D131.

It belongs to the TRAFAC class translation factor GTPase superfamily. Classic translation factor GTPase family. TetM/TetO subfamily.

In terms of biological role, abolishes the inhibitory effect of oxytetracycline on protein synthesis by a non-covalent modification of the ribosomes. The polypeptide is Oxytetracycline resistance protein (otrA) (Streptomyces rimosus).